The chain runs to 293 residues: Lymphocyte antigen 6 complex locus protein G6f (293 aa).

Residues 1–19 form the signal peptide; it reads MAMVVFLLLYLCGHPQAAA. Positions 20–124 constitute an Ig-like V-type domain; it reads DNIQTLYVPS…HKYQNWRVYD (105 aa). At 20–237 the chain is on the extracellular side; sequence DNIQTLYVPS…APLPSWDVSW (218 aa). An intrachain disulfide couples Cys-37 to Cys-108. The N-linked (GlcNAc...) asparagine glycan is linked to Asn-90. A helical transmembrane segment spans residues 238–258; sequence ILMLLFAAGQGVTIIALSIVI. At 259 to 293 the chain is on the cytoplasmic side; the sequence is WRHQRAQGTQDREPSIPHFKPEVQVYENIHLARLR. Tyr-284 carries the phosphotyrosine modification.

Homodimer; disulfide-linked. Interacts with GRB2 and GRB7 in a phosphorylation-dependent manner. Post-translationally, N-glycosylated.

It is found in the cell membrane. Its function is as follows. May play a role in the downstream signal transduction pathways involving GRB2 and GRB7. This is Lymphocyte antigen 6 complex locus protein G6f (Ly6g6f) from Rattus norvegicus (Rat).